Here is a 122-residue protein sequence, read N- to C-terminus: Large ribosomal subunit protein uL18 (122 aa).

Positions 1–25 (MSQISRKQQTQKRHRRLRRHITGTS) are disordered. Positions 9-21 (QTQKRHRRLRRHI) are enriched in basic residues.

This sequence belongs to the universal ribosomal protein uL18 family. In terms of assembly, part of the 50S ribosomal subunit; part of the 5S rRNA/L5/L18/L25 subcomplex. Contacts the 5S and 23S rRNAs.

Functionally, this is one of the proteins that bind and probably mediate the attachment of the 5S RNA into the large ribosomal subunit, where it forms part of the central protuberance. In Synechococcus sp. (strain CC9605), this protein is Large ribosomal subunit protein uL18.